The primary structure comprises 606 residues: tRNA 5-methylaminomethyl-2-thiouridine biosynthesis bifunctional protein MnmC (606 aa).

Residues 1–237 (MNSNSSVQFN…KRDMLCGHYL (237 aa)) are tRNA (mnm(5)s(2)U34)-methyltransferase. The tract at residues 254–606 (IGGGISAACS…RRISVSRFKG (353 aa)) is FAD-dependent cmnm(5)s(2)U34 oxidoreductase.

It in the N-terminal section; belongs to the methyltransferase superfamily. tRNA (mnm(5)s(2)U34)-methyltransferase family. In the C-terminal section; belongs to the DAO family. The cofactor is FAD.

Its subcellular location is the cytoplasm. It catalyses the reaction 5-aminomethyl-2-thiouridine(34) in tRNA + S-adenosyl-L-methionine = 5-methylaminomethyl-2-thiouridine(34) in tRNA + S-adenosyl-L-homocysteine + H(+). In terms of biological role, catalyzes the last two steps in the biosynthesis of 5-methylaminomethyl-2-thiouridine (mnm(5)s(2)U) at the wobble position (U34) in tRNA. Catalyzes the FAD-dependent demodification of cmnm(5)s(2)U34 to nm(5)s(2)U34, followed by the transfer of a methyl group from S-adenosyl-L-methionine to nm(5)s(2)U34, to form mnm(5)s(2)U34. This is tRNA 5-methylaminomethyl-2-thiouridine biosynthesis bifunctional protein MnmC from Idiomarina loihiensis (strain ATCC BAA-735 / DSM 15497 / L2-TR).